The following is a 110-amino-acid chain: Putative pterin-4-alpha-carbinolamine dehydratase (110 aa).

Belongs to the pterin-4-alpha-carbinolamine dehydratase family.

The catalysed reaction is (4aS,6R)-4a-hydroxy-L-erythro-5,6,7,8-tetrahydrobiopterin = (6R)-L-erythro-6,7-dihydrobiopterin + H2O. This chain is Putative pterin-4-alpha-carbinolamine dehydratase, found in Vibrio vulnificus (strain CMCP6).